The chain runs to 232 residues: Ashwin (232 aa).

5 positions are modified to phosphoserine: serine 112, serine 182, serine 184, serine 189, and serine 193. The segment at 163–232 (KMEHNNNDTQ…KRKIQHVTWP (70 aa)) is disordered. Threonine 197 and threonine 198 each carry phosphothreonine. The span at 206-224 (APKEEAEATNHLKPPEVKR) shows a compositional bias: basic and acidic residues.

Belongs to the ashwin family. In terms of assembly, component of the tRNA-splicing ligase complex.

It localises to the nucleus. In Mus musculus (Mouse), this protein is Ashwin.